A 355-amino-acid chain; its full sequence is Protein RecA (355 aa).

67 to 74 (GPESSGKT) contacts ATP.

This sequence belongs to the RecA family.

It is found in the cytoplasm. Can catalyze the hydrolysis of ATP in the presence of single-stranded DNA, the ATP-dependent uptake of single-stranded DNA by duplex DNA, and the ATP-dependent hybridization of homologous single-stranded DNAs. It interacts with LexA causing its activation and leading to its autocatalytic cleavage. The sequence is that of Protein RecA from Histophilus somni (strain 2336) (Haemophilus somnus).